The following is a 2158-amino-acid chain: MSFSKMFPGFNSVTEKCATSSSGSFFSELTASISNFSRTLSNVTKVSSQISSHIEDLKPSVTDAASSFTSTCNSVTKLLDKIMTLIEPFIKAYSFVASMYKSICDMVAKIVASIKDKFTLGFNWVLDKSEDVDVLVIAFLIFAISMLIIVFICPSSVLDGVVQMTHIVFNTVGNFFSALYKLDWLPTWSQKFSMMAQANVLPGESMSHSPLSQVVASLIAFGISTLVFVAVPGRPNGLSNPLSKILYSAGSGAQQCNQLFTLFRNMKDCTSQAFSWVLEIIVDIFGFKNPVLSAISATLSTDLFTWMEEVDAVCDPAHRLENFANPAFTIKLQHLREQALKISAYIATHPVAAFMSHRVTAAIXHLDKIYGENCQHTGVGQYRAEPFMVQWYGASGCGKSTSMRLFINDVLDRMEEPKLNRLYAVSKRDAYWSNYAHQTAILMDDMGALRDGAGQCQDIKDLIDIKSTQPAPLPMAAVEDKGRHFTSRYIFATSNLISAPAQCGLTYPDAFERRRDVLVECRKVGEFNTDAPTSHLEFDVVESKRPHAITHRGLSYDDLLEYVVAKCKVHAEISGKLYGATSGKVAQVDVSPEEIIASMDMLNIQDTKQDAKLPVVVVSEEDRVAYSQELTVEALKYAYQGSLNPAAYFPHDMHKQAIFDVLSESAKETFTRWVNDMLYQGCCNENYRWLIKNIPADYIMHFKSFIYASTINERSFDVQKQLPDGMAHRAIDADVDTLICVEQMPAHVQFLYTAFVRYWCRRKMEQPRQSWVVVCYHSIVDYIKNAWYDLPYILRVLIKAGLILIALNGAFGAVTAFCACWQSNTFPSAEGRGGITNESNSISSRKNKGKSIFARSLLAQAKGDMLEKWASDDGFINEGLKKNLVVLRLGEGVYFRGTYVCSGWVMTVAHAFSSLRDGTTFSIIHAQSISKVQYNAKTARFLKEQDIVLLNVGNPDGPKPDIRKHFPVRDGVCFSKGTQGVCVRAVASKDASQGNLEYLRFNVMMSKGYLEKVTYQMDSSSFKLESQASYEYHMNGENGDCGTLLLLPNVQDKQPCIVGIHCASYDEEAAHKGFVASNATAIFRDQLEDLPTGPVKVAMVRCQLLKDLRARDAALFEEKQVAFVGTLPAEQAATVPHKTTLRRSGLFEAFGPAETAPSIISASDKRGEGFDPYVAGIQKYNETAQNFDEDIARLAYEGLRQAILPVLHSQRVPFGKPVTQNEDVVLNGVDGFDYFDGMELSTSCGYPYNKLGMGTSKREFVEPSGDGDRVQLKRTTPIFDDWEALDVEIRKGNFVELVTTQCAKDERLPLEKVFGKRKTRLFEILPFHYNMLVRKYFLDFSASLMASHNALPCKVGINPGGIEWTLLANGFRAVSDTGFSADYSSFDGRAPIFAFQWFCDLVDDYYGSPPGSPDSNARHVLLMMASCHYTICENKVFRLVGGMPSGFALTVIFNSLLNEFYMRYAFISLLRRPHIAAQAIGCKPSDFNKLFVAVYGDDNLVAVPMELHWYTLPAIAQELEMVNVIIKNGIDKNMDVSSSKMLDLSELTFLSRGFKRHRLGYVQAPLKWVSIIEPMYWIRPSVGCPDALAMLENIDTGVREAFHHGPQVFEKLVTDVQNALKERCFPATTFPTYFELEQDWLVEVTGNPAIGLIKELHIAASAFVPLPPGNTVLNFSDGVHTFADRVSFCSSRTAAAQQWDTTTVLVNCTGAKRPTWVRGPTTWRDFEGLIWPYTMAAIKDHICSIVTKGVTKPHVVFVCGNGYAIGPVCAALYCLSTGQYSSQDVVVRLRTIADVTDLSQYPGGCAKYLLKCADTREEELADTCKIAQAKGETPAYIPQGGFSLGNFRIVQGRIDLQLAQRLPFTVGPYGGWGQHTTRELKLLLKDMEKIYQILVQRESFITLYFDYLSSEQVMLLVDFLRLQGFFPRQNDVDYLLKAFKLSKQRHNKENCHTVYFRKPFLSRKMTMGSKEILSATAAESLFGMDVSANVLKSRLLHLQKPIKCSSMELAFKIYCVIQGHLSKEVVTHFQRMYQQDLTEGIIEKVILWLTATLSESFPVDLVDVPLGLDNIEIQDKGFSLNPNNINMNACDAILFQLTECYNRSTKKHVFCRYTTASSLVVAYVLAHRHQTIDELPSFYATHPDVLLLTPILTGYKAP.

A propeptide spans 1 to 105 (MSFSKMFPGF…VASMYKSICD (105 aa)) (removed in mature form). The 168-residue stretch at 367 to 534 (DKIYGENCQH…GEFNTDAPTS (168 aa)) folds into the SF3 helicase domain. 393–400 (GASGCGKS) contacts ATP. A helical transmembrane segment spans residues 801 to 821 (GLILIALNGAFGAVTAFCACW). At Ser-844 the chain carries O-(5'-phospho-RNA)-serine. Residues 870 to 1083 (ASDDGFINEG…FVASNATAIF (214 aa)) form the Peptidase C3 domain. Residues His-910, Asp-946, and Cys-1041 each act as for picornain 3C-like protease activity in the active site. The RdRp catalytic domain maps to 1376–1511 (DTGFSADYSS…AVPMELHWYT (136 aa)).

It localises to the host membrane. The catalysed reaction is RNA(n) + a ribonucleoside 5'-triphosphate = RNA(n+1) + diphosphate. Its function is as follows. Picornain 3C-like protease is a thiol protease that probably cleaves the polyprotein. This is RNA1 polyprotein from Capsicum annuum (Capsicum pepper).